The following is a 324-amino-acid chain: Biotin synthase (324 aa).

The 229-residue stretch at 50-278 folds into the Radical SAM core domain; the sequence is HAGPAFTCAI…QADILVAGGR (229 aa). The [4Fe-4S] cluster site is built by Cys-67, Cys-71, and Cys-74. 2 residues coordinate [2Fe-2S] cluster: Cys-143 and Cys-203.

This sequence belongs to the radical SAM superfamily. Biotin synthase family. As to quaternary structure, homodimer. The cofactor is [4Fe-4S] cluster. Requires [2Fe-2S] cluster as cofactor.

The enzyme catalyses (4R,5S)-dethiobiotin + (sulfur carrier)-SH + 2 reduced [2Fe-2S]-[ferredoxin] + 2 S-adenosyl-L-methionine = (sulfur carrier)-H + biotin + 2 5'-deoxyadenosine + 2 L-methionine + 2 oxidized [2Fe-2S]-[ferredoxin]. It participates in cofactor biosynthesis; biotin biosynthesis; biotin from 7,8-diaminononanoate: step 2/2. Its function is as follows. Catalyzes the conversion of dethiobiotin (DTB) to biotin by the insertion of a sulfur atom into dethiobiotin via a radical-based mechanism. The sequence is that of Biotin synthase from Oleidesulfovibrio alaskensis (strain ATCC BAA-1058 / DSM 17464 / G20) (Desulfovibrio alaskensis).